A 179-amino-acid polypeptide reads, in one-letter code: Bifunctional protein PyrR (179 aa).

A PRPP-binding motif is present at residues 100 to 112 (VILVDDVLFTGRT).

It belongs to the purine/pyrimidine phosphoribosyltransferase family. PyrR subfamily.

It catalyses the reaction UMP + diphosphate = 5-phospho-alpha-D-ribose 1-diphosphate + uracil. Its function is as follows. Regulates the transcription of the pyrimidine nucleotide (pyr) operon in response to exogenous pyrimidines. Also displays a weak uracil phosphoribosyltransferase activity which is not physiologically significant. This Haemophilus influenzae (strain 86-028NP) protein is Bifunctional protein PyrR.